We begin with the raw amino-acid sequence, 438 residues long: MSKNVVIIGTQWGDEGKGKIVDLISDRAVSVVRFQGGHNAGHTLVIDQQTTVLHLIPSGILHDHVECLIAHGVVLSMSALLKEIAELEGANINVTERLKISPGCPLIFPYHIALDNAREAKCGKTAIGTTGNGIGPTYEDKVARRGLRAGDLLNPILFASKLKEVVEYHNFLLTNYYGTAPVDYQVILYEALSQAKKIKHMIIDVTEKIHQHIANDENILFEGAQGTLLDIDQGTYPFVTSSNTTSGGAVTGSGVGVTDINYVLGIVKAYTTRVGSGPFPTELIYNVSTNKGDAIGKVLGTVGHEFGATTGRQRRCGWLDMVTLKRSFNLNAVTGICLTKLDVLDSLISVKICVAYKLNGKEVTIPPYDAKGYTDAKPVYIEMPGWKTSTIGTNSFDSLPIEAQNYIHKIEQLANLPVDILSTGPDRTQTLILKHPFE.

GTP contacts are provided by residues 13–19 (GDEGKGK) and 41–43 (GHT). The active-site Proton acceptor is the aspartate 14. Aspartate 14 and glycine 41 together coordinate Mg(2+). IMP-binding positions include 14-17 (DEGK), 39-42 (NAGH), threonine 130, arginine 144, glutamine 225, threonine 240, and arginine 312. The Proton donor role is filled by histidine 42. Residue 308 to 314 (ATTGRQR) coordinates substrate. Residues arginine 314, 340–342 (KLD), and 422–424 (STG) contribute to the GTP site.

It belongs to the adenylosuccinate synthetase family. As to quaternary structure, homodimer. Mg(2+) is required as a cofactor.

It localises to the cytoplasm. It carries out the reaction IMP + L-aspartate + GTP = N(6)-(1,2-dicarboxyethyl)-AMP + GDP + phosphate + 2 H(+). It participates in purine metabolism; AMP biosynthesis via de novo pathway; AMP from IMP: step 1/2. Its function is as follows. Plays an important role in the de novo pathway of purine nucleotide biosynthesis. Catalyzes the first committed step in the biosynthesis of AMP from IMP. This Vesicomyosocius okutanii subsp. Calyptogena okutanii (strain HA) protein is Adenylosuccinate synthetase.